Reading from the N-terminus, the 469-residue chain is Lipase A (469 aa).

A signal peptide spans 1 to 22; it reads MMFLTQLVSALFLFFLGPISYG. Positions 40 to 51 are enriched in pro residues; that stretch reads PSEDPFYQPPPG. The interval 40–59 is disordered; the sequence is PSEDPFYQPPPGYEETEPGT. N111 carries N-linked (GlcNAc...) asparagine glycosylation. A disulfide bridge connects residues C129 and C304. Active-site charge relay system residues include S217, D361, and H393. The cysteines at positions 377 and 421 are disulfide-linked.

Belongs to the AB hydrolase superfamily. Lipase family. Class Lip subfamily. Monomer.

The protein resides in the secreted. It carries out the reaction a triacylglycerol + H2O = a diacylglycerol + a fatty acid + H(+). Functionally, hydrolyzes triglycerides, with a preference for substrates with short-chain lengths (C4 to C8). This Arthroderma benhamiae (strain ATCC MYA-4681 / CBS 112371) (Trichophyton mentagrophytes) protein is Lipase A.